The primary structure comprises 176 residues: Ribosome rescue factor SmrB (176 aa).

In terms of domain architecture, Smr spans leucine 97–serine 172.

The protein belongs to the SmrB family. Associates with collided ribosomes, but not with correctly translating polysomes.

Acts as a ribosome collision sensor. Detects stalled/collided disomes (pairs of ribosomes where the leading ribosome is stalled and a second ribosome has collided with it) and endonucleolytically cleaves mRNA at the 5' boundary of the stalled ribosome. Stalled/collided disomes form a new interface (primarily via the 30S subunits) that binds SmrB. Cleaved mRNA becomes available for tmRNA ligation, leading to ribosomal subunit dissociation and rescue of stalled ribosomes. This Vibrio vulnificus (strain CMCP6) protein is Ribosome rescue factor SmrB.